The chain runs to 130 residues: Ribonuclease pancreatic (130 aa).

The N-terminal stretch at 1 to 6 (VQPSLG) is a signal peptide. 2 residues coordinate substrate: K13 and R16. H18 serves as the catalytic Proton acceptor. 4 disulfide bridges follow: C32–C90, C46–C101, C64–C116, and C71–C78. An N-linked (GlcNAc...) asparagine glycan is attached at N40. Substrate-binding positions include 47–51 (KPVNT), K72, and R91. H125 functions as the Proton donor in the catalytic mechanism.

This sequence belongs to the pancreatic ribonuclease family. As to quaternary structure, monomer. Interacts with and forms tight 1:1 complexes with RNH1. Dimerization of two such complexes may occur. Interaction with RNH1 inhibits this protein. Pancreas.

The protein localises to the secreted. It catalyses the reaction an [RNA] containing cytidine + H2O = an [RNA]-3'-cytidine-3'-phosphate + a 5'-hydroxy-ribonucleotide-3'-[RNA].. The enzyme catalyses an [RNA] containing uridine + H2O = an [RNA]-3'-uridine-3'-phosphate + a 5'-hydroxy-ribonucleotide-3'-[RNA].. In terms of biological role, endonuclease that catalyzes the cleavage of RNA on the 3' side of pyrimidine nucleotides. Acts on single-stranded and double-stranded RNA. This is Ribonuclease pancreatic (RNASE1) from Cricetulus griseus (Chinese hamster).